A 327-amino-acid polypeptide reads, in one-letter code: GMP reductase (327 aa).

The active-site Thioimidate intermediate is Cys-175. Position 204–227 (204–227 (IIADGGIRTHGDVAKSIRFGATMV)) interacts with NADP(+).

Belongs to the IMPDH/GMPR family. GuaC type 2 subfamily.

The enzyme catalyses IMP + NH4(+) + NADP(+) = GMP + NADPH + 2 H(+). Catalyzes the irreversible NADPH-dependent deamination of GMP to IMP. It functions in the conversion of nucleobase, nucleoside and nucleotide derivatives of G to A nucleotides, and in maintaining the intracellular balance of A and G nucleotides. This chain is GMP reductase, found in Bacillus cereus (strain ATCC 10987 / NRS 248).